A 161-amino-acid polypeptide reads, in one-letter code: Cyclic pyranopterin monophosphate synthase (161 aa).

Substrate is bound by residues 75–77 and 115–116; these read MCH and ME. Aspartate 130 is an active-site residue.

Belongs to the MoaC family. As to quaternary structure, homohexamer; trimer of dimers.

It carries out the reaction (8S)-3',8-cyclo-7,8-dihydroguanosine 5'-triphosphate = cyclic pyranopterin phosphate + diphosphate. The protein operates within cofactor biosynthesis; molybdopterin biosynthesis. Its function is as follows. Catalyzes the conversion of (8S)-3',8-cyclo-7,8-dihydroguanosine 5'-triphosphate to cyclic pyranopterin monophosphate (cPMP). This Bacillus mycoides (strain KBAB4) (Bacillus weihenstephanensis) protein is Cyclic pyranopterin monophosphate synthase.